Consider the following 177-residue polypeptide: ATP synthase subunit b, chloroplastic (177 aa).

A helical membrane pass occupies residues Ile22–Gly42.

It belongs to the ATPase B chain family. As to quaternary structure, F-type ATPases have 2 components, F(1) - the catalytic core - and F(0) - the membrane proton channel. F(1) has five subunits: alpha(3), beta(3), gamma(1), delta(1), epsilon(1). F(0) has four main subunits: a(1), b(1), b'(1) and c(10-14). The alpha and beta chains form an alternating ring which encloses part of the gamma chain. F(1) is attached to F(0) by a central stalk formed by the gamma and epsilon chains, while a peripheral stalk is formed by the delta, b and b' chains.

It is found in the plastid. The protein resides in the chloroplast thylakoid membrane. Functionally, f(1)F(0) ATP synthase produces ATP from ADP in the presence of a proton or sodium gradient. F-type ATPases consist of two structural domains, F(1) containing the extramembraneous catalytic core and F(0) containing the membrane proton channel, linked together by a central stalk and a peripheral stalk. During catalysis, ATP synthesis in the catalytic domain of F(1) is coupled via a rotary mechanism of the central stalk subunits to proton translocation. Its function is as follows. Component of the F(0) channel, it forms part of the peripheral stalk, linking F(1) to F(0). The sequence is that of ATP synthase subunit b, chloroplastic from Oedogonium cardiacum (Filamentous green alga).